A 229-amino-acid polypeptide reads, in one-letter code: Urease accessory protein UreF (229 aa).

The protein belongs to the UreF family. In terms of assembly, ureD, UreF and UreG form a complex that acts as a GTP-hydrolysis-dependent molecular chaperone, activating the urease apoprotein by helping to assemble the nickel containing metallocenter of UreC. The UreE protein probably delivers the nickel.

The protein resides in the cytoplasm. Required for maturation of urease via the functional incorporation of the urease nickel metallocenter. This Staphylococcus saprophyticus subsp. saprophyticus (strain ATCC 15305 / DSM 20229 / NCIMB 8711 / NCTC 7292 / S-41) protein is Urease accessory protein UreF.